A 399-amino-acid chain; its full sequence is Methylthioribose kinase (399 aa).

ATP-binding positions include asparagine 40, lysine 57, and glutamate 111–leucine 113. Residue aspartate 229 coordinates substrate. Aspartate 246–glutamate 248 contacts ATP. Arginine 344 contacts substrate.

This sequence belongs to the methylthioribose kinase family. Homodimer.

It carries out the reaction 5-(methylsulfanyl)-D-ribose + ATP = 5-(methylsulfanyl)-alpha-D-ribose 1-phosphate + ADP + H(+). It functions in the pathway amino-acid biosynthesis; L-methionine biosynthesis via salvage pathway; S-methyl-5-thio-alpha-D-ribose 1-phosphate from S-methyl-5'-thioadenosine (hydrolase route): step 2/2. Its function is as follows. Catalyzes the phosphorylation of methylthioribose into methylthioribose-1-phosphate. The protein is Methylthioribose kinase of Enterobacter sp. (strain 638).